The following is a 474-amino-acid chain: Protein FAM161A (474 aa).

Disordered regions lie at residues 78–126 (SSSS…PGEI), 185–210 (QKRR…DDAE), and 308–364 (REEL…DQGL). The stretch at 188–250 (REKASDAQET…KKTRERSKAA (63 aa)) forms a coiled coil. Positions 274-454 (KLRELCRAKK…PTASSRGREQ (181 aa)) are required for interaction with CFAP418. A compositionally biased stretch (polar residues) spans 325–335 (LQSSPWPSHST). Glycyl lysine isopeptide (Lys-Gly) (interchain with G-Cter in SUMO2) cross-links involve residues K397 and K413. The tract at residues 412 to 474 (LKETRRPNPS…KELARIGGAR (63 aa)) is disordered. Positions 422–431 (PRHKSPRRSA) are enriched in basic residues. A compositionally biased stretch (basic and acidic residues) spans 450-468 (RGREQAIRRSEKARMKELA).

It belongs to the FAM161 family. In terms of assembly, interacts (via central region) with CFAP418 (via N-terminus); the interaction is direct. Interacts (via C-terminus) with microtubules. Interacts with LCA5. Interacts with CEP290. Interacts with SDCCAG8. Interacts with FAM161B. Interacts with POC1B. Interacts with CEP78. Forms a microtubule-associated complex with POC5, CETN2 and POC1B. Interacts with CCDC15. As to expression, expressed in the retina and kidney.

Its subcellular location is the cytoplasm. The protein resides in the cytoskeleton. It is found in the cilium basal body. It localises to the cell projection. The protein localises to the cilium. Its subcellular location is the microtubule organizing center. The protein resides in the centrosome. It is found in the centriole. Functionally, involved in ciliogenesis. The polypeptide is Protein FAM161A (Rattus norvegicus (Rat)).